Reading from the N-terminus, the 290-residue chain is UPF0761 membrane protein YihY (290 aa).

6 helical membrane passes run 44 to 64 (LLSLVPLVAVVFALFAAFPMF), 104 to 124 (VGACGLIVTALLLMYSIDSAL), 140 to 160 (FAVYWMILTLGPLLAGASLAI), 183 to 203 (IFPLLLSWISFWLLYSIVPTI), 210 to 230 (AIVGAFVAALLFEAGKKGFAL), and 244 to 264 (VLAVIPILFVWVYWTWCIVLL).

Belongs to the UPF0761 family.

Its subcellular location is the cell inner membrane. In Escherichia coli O7:K1 (strain IAI39 / ExPEC), this protein is UPF0761 membrane protein YihY.